The following is a 329-amino-acid chain: Thioredoxin domain-containing protein 6 (329 aa).

In terms of domain architecture, Thioredoxin spans 11-115 (QVNINTQELW…QKTILQQLEA (105 aa)). Positions 157–303 (GKTCTLGIIK…LFPSFKFSDK (147 aa)) are NDK. The disordered stretch occupies residues 303–329 (KDKEAPPGAEAQTMVGPVEDPCMSERI).

Belongs to the NDK family. In terms of assembly, monomer and homodimer. As to expression, expressed in lung airway epithelium (at protein level).

The protein localises to the cytoplasm. It is found in the cytoskeleton. Its subcellular location is the cilium axoneme. It localises to the dynein axonemal particle. Functionally, may be a regulator of microtubule physiology. This is Thioredoxin domain-containing protein 6 from Mus musculus (Mouse).